The primary structure comprises 313 residues: Flagellin (313 aa).

2 coiled-coil regions span residues I5–S33 and V97–T117. Tandem repeats lie at residues K179–D197, K199–Q217, V255–N259, and V262–S266. The tract at residues K179–Q217 is 2 X 19 AA approximate tandem repeats. A compositionally biased stretch (low complexity) spans A190–K199. A disordered region spans residues A190–Q211. Residues E252–L298 adopt a coiled-coil conformation. The interval V255–S266 is 2 X 5 AA approximate repeats of V-N-N-L-N.

Belongs to the bacterial flagellin family.

It localises to the secreted. Its subcellular location is the bacterial flagellum. Its function is as follows. Flagellin is the subunit protein which polymerizes to form the filaments of bacterial flagella. This is Flagellin (fliC) from Xenorhabdus nematophila (Achromobacter nematophilus).